The chain runs to 302 residues: UDP-N-acetylenolpyruvoylglucosamine reductase (302 aa).

An FAD-binding PCMH-type domain is found at 31 to 210 (IGGQTKVYFR…ENEVLELKKK (180 aa)). The active site involves arginine 175. Residue serine 224 is the Proton donor of the active site. Glutamate 297 is an active-site residue.

Belongs to the MurB family. FAD serves as cofactor.

It is found in the cytoplasm. The enzyme catalyses UDP-N-acetyl-alpha-D-muramate + NADP(+) = UDP-N-acetyl-3-O-(1-carboxyvinyl)-alpha-D-glucosamine + NADPH + H(+). Its pathway is cell wall biogenesis; peptidoglycan biosynthesis. In terms of biological role, cell wall formation. In Pelagibacter ubique (strain HTCC1062), this protein is UDP-N-acetylenolpyruvoylglucosamine reductase.